The chain runs to 1594 residues: Transcription factor Gibbin (1594 aa).

Disordered stretches follow at residues 19–111, 149–241, 256–307, and 367–464; these read PDYL…RHWD, LRLS…LADA, QLLE…DPLG, and CSPH…RKGK. Residues 30 to 47 are compositionally biased toward pro residues; that stretch reads GGPPTPRPLLPTRPPASP. Residue Lys-79 is modified to N6-acetyllysine. Positions 165–177 are enriched in polar residues; the sequence is SFFSSPSLANSIR. Residues 178–193 are compositionally biased toward basic and acidic residues; the sequence is SPEERANPHTKSERPS. Residues 228 to 240 are compositionally biased toward acidic residues; it reads PEPDGPDYSELAD. Position 267 is a phosphoserine (Ser-267). Positions 272-303 are enriched in low complexity; that stretch reads PQLLDPQPRFLDPQALEPLGEGLELPPLQPLA. The span at 391-401 shows a compositional bias: basic residues; that stretch reads ILCRRRKAGRG. Residues 395 to 407 constitute a DNA-binding region (a.T hook 1); the sequence is RRKAGRGRKADSG. Pro residues predominate over residues 427 to 447; the sequence is EPPPLPPPPPPTLSGPGPVPE. The a.T hook 2 DNA-binding region spans 541-553; it reads KRKRGRPPKNLLL. Positions 578-604 are disordered; sequence MPEVKKRRRRKQKLASPQPSYAADAND. Ser-593 carries the post-translational modification Phosphoserine. Residue Lys-606 forms a Glycyl lysine isopeptide (Lys-Gly) (interchain with G-Cter in SUMO2) linkage. The interval 714–789 is disordered; sequence LTELGHPRKR…PGGQAGRNCG (76 aa). A compositionally biased stretch (basic residues) spans 734–743; the sequence is KPKRKRRSRK. 2 positions are modified to phosphoserine: Ser-825 and Ser-842. Arg-887 is subject to Omega-N-methylarginine. At Ser-892 the chain carries Phosphoserine. The tract at residues 942–967 is disordered; the sequence is KLAPPPSAVARSPTTHPPANTYPPQY. At Ser-1060 the chain carries Phosphoserine. Disordered regions lie at residues 1152-1191 and 1245-1306; these read VSET…QSSL and STSA…PDLG. Composition is skewed to low complexity over residues 1153-1168, 1180-1191, and 1245-1264; these read SETF…QFSQ, SEASSSEGQSSL, and STSA…PRQP. Ser-1180 carries the post-translational modification Phosphoserine. A phosphoserine mark is found at Ser-1315, Ser-1317, and Ser-1392. At Thr-1394 the chain carries Phosphothreonine. Ser-1396 carries the phosphoserine modification. Lys-1402 is covalently cross-linked (Glycyl lysine isopeptide (Lys-Gly) (interchain with G-Cter in SUMO2)). The tract at residues 1495-1525 is disordered; that stretch reads HLASPPATPKADKEPLEMARPPGPPRGPAAA. 2 positions are modified to phosphoserine: Ser-1498 and Ser-1540.

The protein localises to the nucleus. It localises to the chromosome. Its function is as follows. Transcription factor required for the proper patterning of the epidermis, which plays a key role in early epithelial morphogenesis. Directly binds promoter and enhancer regions and acts by maintaining local enhancer-promoter chromatin architecture. Interacts with many sequence-specific zinc-finger transcription factors and methyl-CpG-binding proteins to regulate the expression of mesoderm genes that wire surface ectoderm stratification. This chain is Transcription factor Gibbin, found in Mus musculus (Mouse).